The following is a 441-amino-acid chain: Putative F-box protein At1g33530 (441 aa).

One can recognise an F-box domain in the interval 91–137 (TTLAVELPDVLVEEILQRLPVKYLVRLKSISKGWKSLIESDHLAEKH).

The protein is Putative F-box protein At1g33530 of Arabidopsis thaliana (Mouse-ear cress).